Reading from the N-terminus, the 427-residue chain is Gamma-glutamyl phosphate reductase (427 aa).

Belongs to the gamma-glutamyl phosphate reductase family.

The protein resides in the cytoplasm. It carries out the reaction L-glutamate 5-semialdehyde + phosphate + NADP(+) = L-glutamyl 5-phosphate + NADPH + H(+). The protein operates within amino-acid biosynthesis; L-proline biosynthesis; L-glutamate 5-semialdehyde from L-glutamate: step 2/2. Its function is as follows. Catalyzes the NADPH-dependent reduction of L-glutamate 5-phosphate into L-glutamate 5-semialdehyde and phosphate. The product spontaneously undergoes cyclization to form 1-pyrroline-5-carboxylate. In Anaeromyxobacter dehalogenans (strain 2CP-1 / ATCC BAA-258), this protein is Gamma-glutamyl phosphate reductase.